We begin with the raw amino-acid sequence, 331 residues long: uncharacterized protein (331 aa).

It belongs to the ornithine cyclodeaminase/mu-crystallin family.

This is an uncharacterized protein from Sinorhizobium fredii (strain NBRC 101917 / NGR234).